A 1034-amino-acid polypeptide reads, in one-letter code: Probable isoleucine--tRNA ligase, mitochondrial (1034 aa).

Residues 1-32 (MISLNNSFFNKRVIVNSFNNYKRSFGTKSQNE) constitute a mitochondrion transit peptide. The 'HIGH' region motif lies at 94-104 (PYANGDLHMGH). The 'KMSKS' region signature appears at 655-659 (KMSKS). An ATP-binding site is contributed by K658.

This sequence belongs to the class-I aminoacyl-tRNA synthetase family.

It localises to the mitochondrion matrix. It carries out the reaction tRNA(Ile) + L-isoleucine + ATP = L-isoleucyl-tRNA(Ile) + AMP + diphosphate. This chain is Probable isoleucine--tRNA ligase, mitochondrial (mileS), found in Dictyostelium discoideum (Social amoeba).